A 426-amino-acid polypeptide reads, in one-letter code: Glutamate-1-semialdehyde 2,1-aminomutase (426 aa).

K265 carries the N6-(pyridoxal phosphate)lysine modification.

Belongs to the class-III pyridoxal-phosphate-dependent aminotransferase family. HemL subfamily. As to quaternary structure, homodimer. The cofactor is pyridoxal 5'-phosphate.

It localises to the cytoplasm. The enzyme catalyses (S)-4-amino-5-oxopentanoate = 5-aminolevulinate. Its pathway is porphyrin-containing compound metabolism; protoporphyrin-IX biosynthesis; 5-aminolevulinate from L-glutamyl-tRNA(Glu): step 2/2. The chain is Glutamate-1-semialdehyde 2,1-aminomutase from Escherichia coli O9:H4 (strain HS).